A 537-amino-acid chain; its full sequence is O-phosphoserine--tRNA(Cys) ligase (537 aa).

Substrate is bound by residues 186–188 (HMT), 231–233 (SAS), 273–274 (YY), and Asn-317.

This sequence belongs to the class-II aminoacyl-tRNA synthetase family. O-phosphoseryl-tRNA(Cys) synthetase subfamily. As to quaternary structure, homotetramer. Interacts with SepCysS.

It carries out the reaction tRNA(Cys) + O-phospho-L-serine + ATP = O-phospho-L-seryl-tRNA(Cys) + AMP + diphosphate. Functionally, catalyzes the attachment of O-phosphoserine (Sep) to tRNA(Cys). The sequence is that of O-phosphoserine--tRNA(Cys) ligase from Methanococcus maripaludis (strain C5 / ATCC BAA-1333).